Reading from the N-terminus, the 244-residue chain is Uridylate kinase (244 aa).

17-20 (KVSG) serves as a coordination point for ATP. Residues 25–30 (GDKGFG) form an involved in allosteric activation by GTP region. Gly-59 provides a ligand contact to UMP. ATP contacts are provided by Gly-60 and Arg-64. Residues Asp-80 and 141-148 (VGNPFFTT) each bind UMP. ATP-binding residues include Thr-168, Gln-169, Tyr-174, and Asp-177.

It belongs to the UMP kinase family. As to quaternary structure, homohexamer.

It is found in the cytoplasm. It carries out the reaction UMP + ATP = UDP + ADP. Its pathway is pyrimidine metabolism; CTP biosynthesis via de novo pathway; UDP from UMP (UMPK route): step 1/1. Its activity is regulated as follows. Allosterically activated by GTP. Inhibited by UTP. Its function is as follows. Catalyzes the reversible phosphorylation of UMP to UDP. This chain is Uridylate kinase, found in Ehrlichia ruminantium (strain Welgevonden).